A 197-amino-acid polypeptide reads, in one-letter code: Viral polyamine acetyltransferase (197 aa).

N22 lines the acetyl-CoA pocket. The active site involves E27. Residues 102–182 (SYTPDDKCLY…YQYGITKPFD (81 aa)) enclose the N-acetyltransferase domain. Residues I115, S117, G121, G123, A125, T126, T149, N150, and K159 each contribute to the acetyl-CoA site.

This sequence belongs to the acetyltransferase family.

The catalysed reaction is spermine + acetyl-CoA = N(1)-acetylspermine + CoA + H(+). It catalyses the reaction spermidine + acetyl-CoA = N(1)-acetylspermidine + CoA + H(+). It carries out the reaction spermidine + acetyl-CoA = N(8)-acetylspermidine + CoA + H(+). The enzyme catalyses putrescine + acetyl-CoA = N-acetylputrescine + CoA + H(+). The catalysed reaction is cadaverine + acetyl-CoA = N-acetylcadaverine + CoA + H(+). It catalyses the reaction sym-homospermidine + acetyl-CoA = N(1)-acetyl-sym-homospermidine + CoA + H(+). Acetylates polyamines such as spermine, spermidine, cadaverine, homospermidine and putrescine (the latter with low efficiency). May play a role in the regulation of polyamine catabolism in the host during viral replication. In Chlorella (PBCV-1), this protein is Viral polyamine acetyltransferase.